Consider the following 441-residue polypeptide: Ribosomal protein uS12 methylthiotransferase RimO (441 aa).

The MTTase N-terminal domain occupies 7-117 (ASIAMISLGC…VVLEVHRAAP (111 aa)). [4Fe-4S] cluster is bound by residues Cys-16, Cys-52, Cys-81, Cys-150, Cys-154, and Cys-157. The region spanning 136–373 (LTPRHYAYLK…MAHQQAISAA (238 aa)) is the Radical SAM core domain. A TRAM domain is found at 376 to 441 (QTRVGREIDV…DEYDLHGDAV (66 aa)).

This sequence belongs to the methylthiotransferase family. RimO subfamily. [4Fe-4S] cluster is required as a cofactor.

The protein localises to the cytoplasm. It carries out the reaction L-aspartate(89)-[ribosomal protein uS12]-hydrogen + (sulfur carrier)-SH + AH2 + 2 S-adenosyl-L-methionine = 3-methylsulfanyl-L-aspartate(89)-[ribosomal protein uS12]-hydrogen + (sulfur carrier)-H + 5'-deoxyadenosine + L-methionine + A + S-adenosyl-L-homocysteine + 2 H(+). Its function is as follows. Catalyzes the methylthiolation of an aspartic acid residue of ribosomal protein uS12. In Bordetella petrii (strain ATCC BAA-461 / DSM 12804 / CCUG 43448), this protein is Ribosomal protein uS12 methylthiotransferase RimO.